The sequence spans 210 residues: Uracil phosphoribosyltransferase (210 aa).

5-phospho-alpha-D-ribose 1-diphosphate contacts are provided by residues arginine 78, arginine 103, and 130–138; that span reads DPMLATGGT. Residues isoleucine 193 and 198 to 200 each bind uracil; that span reads GDA. Aspartate 199 contacts 5-phospho-alpha-D-ribose 1-diphosphate.

Belongs to the UPRTase family. The cofactor is Mg(2+).

The catalysed reaction is UMP + diphosphate = 5-phospho-alpha-D-ribose 1-diphosphate + uracil. Its pathway is pyrimidine metabolism; UMP biosynthesis via salvage pathway; UMP from uracil: step 1/1. Allosterically activated by GTP. Functionally, catalyzes the conversion of uracil and 5-phospho-alpha-D-ribose 1-diphosphate (PRPP) to UMP and diphosphate. This chain is Uracil phosphoribosyltransferase, found in Stenotrophomonas maltophilia (strain R551-3).